We begin with the raw amino-acid sequence, 181 residues long: Large ribosomal subunit protein uL10 (181 aa).

This sequence belongs to the universal ribosomal protein uL10 family. Part of the ribosomal stalk of the 50S ribosomal subunit. The N-terminus interacts with L11 and the large rRNA to form the base of the stalk. The C-terminus forms an elongated spine to which L12 dimers bind in a sequential fashion forming a multimeric L10(L12)X complex.

Forms part of the ribosomal stalk, playing a central role in the interaction of the ribosome with GTP-bound translation factors. The polypeptide is Large ribosomal subunit protein uL10 (Acidobacterium capsulatum (strain ATCC 51196 / DSM 11244 / BCRC 80197 / JCM 7670 / NBRC 15755 / NCIMB 13165 / 161)).